The primary structure comprises 80 residues: Protein transport protein SSS1 (80 aa).

Residues 1–46 (MARASEKGEEKKQSNNQVEKLVEAPVEFVREGTQFLAKCKKPDLKE) lie on the Cytoplasmic side of the membrane. Residues 47 to 75 (YTKIVKAVGIGFIAVGIIGYAIKLIHIPI) form a helical membrane-spanning segment. The Extracellular segment spans residues 76–80 (RYVIV).

This sequence belongs to the SecE/SEC61-gamma family. In terms of assembly, component of the heterotrimeric Sec61 complex, which is composed of SSH1, SBH1 and SSS1. Presumably three to four Sec61 heterotrimers assemble into an oligomeric ring with a central aqueous pore. In cotranslational ER import, the pore diameter varies from 9-15 A in a ribosome-free resting state to 40-60 A in a functional state when associated with the ribosome. The Sec61 complex is part of a channel-forming translocon complex whose composition seem to change dependent upon different functional states. During post-translational ER import the Sec61 complex associates with the Sec62/63 complex to form the Sec complex. SSH1 is a component of the heterotrimeric Ssh1 complex, which is composed of SSH1, SBH2 and SSS1. SSS1 interacts with OST1, OST4, SWP1 and WBP1, components of the OT complex.

The protein localises to the endoplasmic reticulum membrane. In terms of biological role, part of the Sec61 complex, which is the major component of channel-forming translocon complex that mediates protein translocation across the endoplasmic reticulum (ER). The functional states of the translocon complex include co- and post-translational ER import, cotranslational membrane protein integration and retrograde transport of misfolded proteins out of the ER. In the cotranslational pathway, ribosomes synthesizing presecretory proteins are targeted to the translocon by the cytosolic signal recognition particle (SRP) and its ER-localized receptor. The association of the Sec61 complex with the ribosome is mediated by the 28S rRNA of the large ribosomal subunit. SRP-independent post-translational translocation requires the association of additional factors, such as the Sec62/63 complex and KAR2. Also part of the Ssh1 complex, which probably is the major component of a channel-forming translocon complex that may function exclusively in the cotranslational pathway of protein ER import. In Saccharomyces cerevisiae (strain ATCC 204508 / S288c) (Baker's yeast), this protein is Protein transport protein SSS1 (SSS1).